A 360-amino-acid chain; its full sequence is MLVWLAEYLVRYETAFNAISYITVRAILTLLTALFISLWIGPKVIKRLQILKFGQEVRNDGPESHFAKKGTPTMGGVMILFSIGVSTLLWANLANPYIWVCLFVLFGYGAIGFVDDFRKITRKNTDGLIARWKYFWMSVVALVAILWLYWLGHDTDATRLVIPFFKDIMPQLGLFYIVLSYFVIVGTGNAVNLTDGLDGLAIMPTALVAGAFALIAWATGNVNFAEYLHIPYIKYSSEVVVFCTAIVGASLGFLWFNTYPAQVFMGDVGSLALGGALGVVAILVRQEFLLVIMGGVFVVEALSVILQVGSYKLRKQRIFRMAPIHHHFELKGWPEPRVIIRFWIISLMLVLMGLVTLKLR.

10 helical membrane passes run 21 to 41 (YITVRAILTLLTALFISLWIG), 73 to 93 (TMGGVMILFSIGVSTLLWANL), 94 to 114 (ANPYIWVCLFVLFGYGAIGFV), 132 to 152 (WKYFWMSVVALVAILWLYWLG), 168 to 188 (IMPQLGLFYIVLSYFVIVGTG), 199 to 219 (GLAIMPTALVAGAFALIAWAT), 239 to 259 (VVVFCTAIVGASLGFLWFNTY), 263 to 283 (VFMGDVGSLALGGALGVVAIL), 288 to 308 (FLLVIMGGVFVVEALSVILQV), and 338 to 358 (VIIRFWIISLMLVLMGLVTLK).

It belongs to the glycosyltransferase 4 family. MraY subfamily. Mg(2+) serves as cofactor.

The protein resides in the cell inner membrane. It carries out the reaction UDP-N-acetyl-alpha-D-muramoyl-L-alanyl-gamma-D-glutamyl-meso-2,6-diaminopimeloyl-D-alanyl-D-alanine + di-trans,octa-cis-undecaprenyl phosphate = di-trans,octa-cis-undecaprenyl diphospho-N-acetyl-alpha-D-muramoyl-L-alanyl-D-glutamyl-meso-2,6-diaminopimeloyl-D-alanyl-D-alanine + UMP. Its pathway is cell wall biogenesis; peptidoglycan biosynthesis. Functionally, catalyzes the initial step of the lipid cycle reactions in the biosynthesis of the cell wall peptidoglycan: transfers peptidoglycan precursor phospho-MurNAc-pentapeptide from UDP-MurNAc-pentapeptide onto the lipid carrier undecaprenyl phosphate, yielding undecaprenyl-pyrophosphoryl-MurNAc-pentapeptide, known as lipid I. The protein is Phospho-N-acetylmuramoyl-pentapeptide-transferase of Haemophilus influenzae (strain PittEE).